The following is a 95-amino-acid chain: Aspartyl/glutamyl-tRNA(Asn/Gln) amidotransferase subunit C (95 aa).

This sequence belongs to the GatC family. As to quaternary structure, heterotrimer of A, B and C subunits.

It carries out the reaction L-glutamyl-tRNA(Gln) + L-glutamine + ATP + H2O = L-glutaminyl-tRNA(Gln) + L-glutamate + ADP + phosphate + H(+). It catalyses the reaction L-aspartyl-tRNA(Asn) + L-glutamine + ATP + H2O = L-asparaginyl-tRNA(Asn) + L-glutamate + ADP + phosphate + 2 H(+). Functionally, allows the formation of correctly charged Asn-tRNA(Asn) or Gln-tRNA(Gln) through the transamidation of misacylated Asp-tRNA(Asn) or Glu-tRNA(Gln) in organisms which lack either or both of asparaginyl-tRNA or glutaminyl-tRNA synthetases. The reaction takes place in the presence of glutamine and ATP through an activated phospho-Asp-tRNA(Asn) or phospho-Glu-tRNA(Gln). The polypeptide is Aspartyl/glutamyl-tRNA(Asn/Gln) amidotransferase subunit C (Allorhizobium ampelinum (strain ATCC BAA-846 / DSM 112012 / S4) (Agrobacterium vitis (strain S4))).